The following is a 51-amino-acid chain: Nawaprin (51 aa).

One can recognise a WAP domain in the interval 1 to 50 (NEKSGSCPDMSMPIPPLGICKTLCNSDSGCPNVQKCCKNGCGFMTCTTPV). Cystine bridges form between Cys7–Cys37, Cys20–Cys41, Cys24–Cys36, and Cys30–Cys46.

In terms of tissue distribution, expressed by the venom gland.

It is found in the secreted. In terms of biological role, damages membranes of susceptible bacteria. Has no hemolytic activity. Not toxic to mice. Does not inhibit the proteinases elastase and cathepsin G. The chain is Nawaprin from Naja nigricollis (Black-necked spitting cobra).